We begin with the raw amino-acid sequence, 108 residues long: Nucleoid-associated protein BMASAVP1_A1850 (108 aa).

The segment at 84–108 is disordered; that stretch reads EATSQEKMSGMTSGLPLPPGFKLPF. Polar residues predominate over residues 85-95; sequence ATSQEKMSGMT. The span at 99–108 shows a compositional bias: pro residues; it reads PLPPGFKLPF.

It belongs to the YbaB/EbfC family. In terms of assembly, homodimer.

The protein resides in the cytoplasm. The protein localises to the nucleoid. Binds to DNA and alters its conformation. May be involved in regulation of gene expression, nucleoid organization and DNA protection. The chain is Nucleoid-associated protein BMASAVP1_A1850 from Burkholderia mallei (strain SAVP1).